The following is a 340-amino-acid chain: MPKTSDTEYLSFPILLGDIGGTNARFSILIDSFAEPVHLTTVKTAEYPGIDDAIQQAVLDKTSLQPVSTILAIAGPIEGDEIPLTNCHWVVKPKDMLAKLGLKDVIVINDFEAQALAIAALDDDNREPIGSGKKDMLASRVVLGPGTGLGVAGLVYARHMWFPVPGEGGHIDIGPRSARDYVVFPHIETIEGRVAGEQILCGRGLVNLYRAICKADGIEPVFSDPADITSQGLSGQNAQAKETLSLFSTYLGRVAGDLALIFMAKGGVYLAGGISQKIIPALKSPEFRAAFEDKAPHSALMRTIPTFVVTHPQAALSGLATYARTPADFGLALDGRRWRA.

An ATP-binding site is contributed by 17-22 (GDIGGT).

It belongs to the bacterial glucokinase family.

It is found in the cytoplasm. It catalyses the reaction D-glucose + ATP = D-glucose 6-phosphate + ADP + H(+). This chain is Glucokinase, found in Agrobacterium fabrum (strain C58 / ATCC 33970) (Agrobacterium tumefaciens (strain C58)).